We begin with the raw amino-acid sequence, 61 residues long: Photosystem II reaction center protein K (61 aa).

A propeptide spanning residues 1–24 is cleaved from the precursor; the sequence is MLNIFSLICICLNSALYSSSLFFA. A helical membrane pass occupies residues 40 to 60; it reads MPVIPLFFFLLAFVWQAAVSF.

This sequence belongs to the PsbK family. As to quaternary structure, PSII is composed of 1 copy each of membrane proteins PsbA, PsbB, PsbC, PsbD, PsbE, PsbF, PsbH, PsbI, PsbJ, PsbK, PsbL, PsbM, PsbT, PsbX, PsbY, PsbZ, Psb30/Ycf12, at least 3 peripheral proteins of the oxygen-evolving complex and a large number of cofactors. It forms dimeric complexes.

It localises to the plastid. Its subcellular location is the chloroplast thylakoid membrane. Its function is as follows. One of the components of the core complex of photosystem II (PSII). PSII is a light-driven water:plastoquinone oxidoreductase that uses light energy to abstract electrons from H(2)O, generating O(2) and a proton gradient subsequently used for ATP formation. It consists of a core antenna complex that captures photons, and an electron transfer chain that converts photonic excitation into a charge separation. The polypeptide is Photosystem II reaction center protein K (Panax ginseng (Korean ginseng)).